A 379-amino-acid chain; its full sequence is Cobalt-precorrin-5B C(1)-methyltransferase (379 aa).

The protein belongs to the CbiD family.

It carries out the reaction Co-precorrin-5B + S-adenosyl-L-methionine = Co-precorrin-6A + S-adenosyl-L-homocysteine. Its pathway is cofactor biosynthesis; adenosylcobalamin biosynthesis; cob(II)yrinate a,c-diamide from sirohydrochlorin (anaerobic route): step 6/10. Catalyzes the methylation of C-1 in cobalt-precorrin-5B to form cobalt-precorrin-6A. The polypeptide is Cobalt-precorrin-5B C(1)-methyltransferase (Cyanothece sp. (strain PCC 7425 / ATCC 29141)).